The chain runs to 207 residues: Superoxide dismutase [Mn] (207 aa).

Mn(2+)-binding residues include His-28, His-76, Asp-160, and His-164.

It belongs to the iron/manganese superoxide dismutase family. It depends on Mn(2+) as a cofactor.

It catalyses the reaction 2 superoxide + 2 H(+) = H2O2 + O2. Its function is as follows. Destroys superoxide anion radicals which are normally produced within the cells and which are toxic to biological systems. The polypeptide is Superoxide dismutase [Mn] (sodA) (Mycobacterium lepraemurium).